A 287-amino-acid chain; its full sequence is Outer membrane protein TP0453 (287 aa).

The first 24 residues, 1–24 (MIRRRYRGCTQGAWIVSVGMLFAS), serve as a signal peptide directing secretion. Cys-25 carries N-palmitoyl cysteine lipidation. Cys-25 is lipidated: S-diacylglycerol cysteine. Amphipathic helix stretches follow at residues 36–40 (PLGVV), 56–63 (ENLISRII), 69–77 (KADIKKIVD), 103–112 (YAFTNLIFSR), 155–162 (MSKMLSRL), 172–179 (PRFEKECT), 194–202 (GGHFITKLL), 240–250 (FPIQFLISRVL), and 270–279 (AERLASVISS).

As to quaternary structure, a mix of monomer and dimers; may integrate into the membrane as a dimer. In terms of processing, palmitoylated upon expression of a fusion protein with first 46 residues fused to PhoA in E.coli.

The protein localises to the cell outer membrane. In terms of biological role, might be involved in ligand transport, alters membrane permeability at acidic pH (4.0 to 5.5). Incubation of the non-lipidated form with lipid vesicles increases their permeability. This chain is Outer membrane protein TP0453, found in Treponema pallidum (strain Nichols).